Reading from the N-terminus, the 400-residue chain is Elongation factor Tu (400 aa).

Residues 10–208 (KPHVNVGTIG…AMDNYIPDPQ (199 aa)) enclose the tr-type G domain. The segment at 19–26 (GHIDHGKS) is G1. 19–26 (GHIDHGKS) contacts GTP. Position 26 (S26) interacts with Mg(2+). Residues 60-64 (GITIN) are G2. Residues 81–84 (DCPG) are G3. GTP contacts are provided by residues 81 to 85 (DCPGH) and 136 to 139 (NKTD). The tract at residues 136-139 (NKTD) is G4. Residues 174–176 (SAL) are G5.

This sequence belongs to the TRAFAC class translation factor GTPase superfamily. Classic translation factor GTPase family. EF-Tu/EF-1A subfamily. In terms of assembly, monomer.

It is found in the cytoplasm. It carries out the reaction GTP + H2O = GDP + phosphate + H(+). In terms of biological role, GTP hydrolase that promotes the GTP-dependent binding of aminoacyl-tRNA to the A-site of ribosomes during protein biosynthesis. The polypeptide is Elongation factor Tu (Thermotoga neapolitana (strain ATCC 49049 / DSM 4359 / NBRC 107923 / NS-E)).